The primary structure comprises 339 residues: Aspartate carbamoyltransferase catalytic subunit (339 aa).

2 residues coordinate carbamoyl phosphate: arginine 59 and threonine 60. L-aspartate is bound at residue lysine 87. Residues arginine 109, histidine 142, and glutamine 145 each contribute to the carbamoyl phosphate site. L-aspartate is bound by residues arginine 182 and arginine 253. 2 residues coordinate carbamoyl phosphate: glycine 294 and proline 295.

It belongs to the aspartate/ornithine carbamoyltransferase superfamily. ATCase family. In terms of assembly, heterododecamer (2C3:3R2) of six catalytic PyrB chains organized as two trimers (C3), and six regulatory PyrI chains organized as three dimers (R2).

The catalysed reaction is carbamoyl phosphate + L-aspartate = N-carbamoyl-L-aspartate + phosphate + H(+). It functions in the pathway pyrimidine metabolism; UMP biosynthesis via de novo pathway; (S)-dihydroorotate from bicarbonate: step 2/3. Functionally, catalyzes the condensation of carbamoyl phosphate and aspartate to form carbamoyl aspartate and inorganic phosphate, the committed step in the de novo pyrimidine nucleotide biosynthesis pathway. The sequence is that of Aspartate carbamoyltransferase catalytic subunit from Prochlorococcus marinus (strain NATL2A).